The following is an 81-amino-acid chain: ATP synthase subunit c, chloroplastic (81 aa).

The next 2 helical transmembrane spans lie at 3 to 23 (PLIA…ASIG) and 57 to 77 (LAFM…LLFA).

Belongs to the ATPase C chain family. As to quaternary structure, F-type ATPases have 2 components, F(1) - the catalytic core - and F(0) - the membrane proton channel. F(1) has five subunits: alpha(3), beta(3), gamma(1), delta(1), epsilon(1). F(0) has four main subunits: a(1), b(1), b'(1) and c(10-14). The alpha and beta chains form an alternating ring which encloses part of the gamma chain. F(1) is attached to F(0) by a central stalk formed by the gamma and epsilon chains, while a peripheral stalk is formed by the delta, b and b' chains.

Its subcellular location is the plastid. The protein localises to the chloroplast thylakoid membrane. In terms of biological role, f(1)F(0) ATP synthase produces ATP from ADP in the presence of a proton or sodium gradient. F-type ATPases consist of two structural domains, F(1) containing the extramembraneous catalytic core and F(0) containing the membrane proton channel, linked together by a central stalk and a peripheral stalk. During catalysis, ATP synthesis in the catalytic domain of F(1) is coupled via a rotary mechanism of the central stalk subunits to proton translocation. Functionally, key component of the F(0) channel; it plays a direct role in translocation across the membrane. A homomeric c-ring of between 10-14 subunits forms the central stalk rotor element with the F(1) delta and epsilon subunits. In Agrostis stolonifera (Creeping bentgrass), this protein is ATP synthase subunit c, chloroplastic.